A 705-amino-acid chain; its full sequence is Voltage-dependent calcium channel beta subunit-associated regulatory protein (705 aa).

Residues 1–45 lie on the Extracellular side of the membrane; the sequence is MQPTATMATAATTTTTTTATVALTTSWDNATGRPTAEPDPILDNY. N-linked (GlcNAc...) asparagine glycosylation occurs at Asn29. A helical; Signal-anchor for type III membrane protein transmembrane segment spans residues 46–66; the sequence is VLLVVVMSLFVGGTLVVLSGV. Residues 67–705 are Cytoplasmic-facing; the sequence is LLLCKRCWDV…APTSPDHSPA (639 aa). 2 disordered regions span residues 91–113 and 212–284; these read TTTYLDNGTHPAQDPDFRGEDPE and GKAL…GSGA. Positions 245–254 are enriched in polar residues; that stretch reads PSASSDSGEG. Over residues 267 to 284 the composition is skewed to gly residues; the sequence is GGPGAAAGPGEAGPGSGA. Phosphoserine is present on residues Ser299 and Ser304. Disordered regions lie at residues 316 to 353, 369 to 436, 448 to 540, and 559 to 655; these read PSQRAASLDTRGSPKRHHFQRQRAASESTEQEEGDAPQ, FPHP…SYRD, AAAS…RRDY, and HFDD…CPGS. A compositionally biased stretch (acidic residues) spans 344–353; that stretch reads TEQEEGDAPQ. Positions 371–382 are enriched in pro residues; it reads HPRPFLASPPPA. Over residues 383 to 397 the composition is skewed to low complexity; that stretch reads LGRLEAAEAAGGASP. Residues 479 to 488 show a composition bias toward pro residues; the sequence is AFPPPSPPAP. A compositionally biased stretch (basic and acidic residues) spans 489–499; the sequence is RPKDGEARRLL. Phosphoserine occurs at positions 507 and 528. A compositionally biased stretch (basic residues) spans 567–585; that stretch reads ARHRARAHPHARKQWQRGR. A compositionally biased stretch (low complexity) spans 591–614; sequence GARAAPALAGTPAPPAGAARPARA. Phosphoserine is present on Ser621. Thr698 is subject to Phosphothreonine. Phosphoserine occurs at positions 699 and 703.

In terms of assembly, interacts with voltage-dependent calcium channels CACNB1, CACNB2, CACNB3 and CACNB4 beta subunits; prevents their interaction with the CACNA1C alpha subunit thereby negatively regulating the activity of the corresponding calcium channels.

It is found in the cytoplasmic vesicle. The protein localises to the secretory vesicle. The protein resides in the synaptic vesicle membrane. It localises to the cell membrane. Its subcellular location is the cell projection. It is found in the growth cone. In terms of biological role, negatively regulates voltage-gated calcium channels by preventing the interaction between their alpha and beta subunits. Thereby, negatively regulates calcium channels activity at the plasma membrane and indirectly inhibits calcium-regulated exocytosis. This is Voltage-dependent calcium channel beta subunit-associated regulatory protein from Homo sapiens (Human).